The primary structure comprises 432 residues: D-amino acid dehydrogenase (432 aa).

3-17 (VVVLGSGVVGVASAW) contacts FAD.

It belongs to the DadA oxidoreductase family. Requires FAD as cofactor.

The catalysed reaction is a D-alpha-amino acid + A + H2O = a 2-oxocarboxylate + AH2 + NH4(+). It functions in the pathway amino-acid degradation; D-alanine degradation; NH(3) and pyruvate from D-alanine: step 1/1. Its function is as follows. Oxidative deamination of D-amino acids. This Cronobacter sakazakii (strain ATCC BAA-894) (Enterobacter sakazakii) protein is D-amino acid dehydrogenase.